A 335-amino-acid chain; its full sequence is S-adenosylmethionine:tRNA ribosyltransferase-isomerase (335 aa).

This sequence belongs to the QueA family. As to quaternary structure, monomer.

The protein resides in the cytoplasm. It catalyses the reaction 7-aminomethyl-7-carbaguanosine(34) in tRNA + S-adenosyl-L-methionine = epoxyqueuosine(34) in tRNA + adenine + L-methionine + 2 H(+). It functions in the pathway tRNA modification; tRNA-queuosine biosynthesis. Its function is as follows. Transfers and isomerizes the ribose moiety from AdoMet to the 7-aminomethyl group of 7-deazaguanine (preQ1-tRNA) to give epoxyqueuosine (oQ-tRNA). The polypeptide is S-adenosylmethionine:tRNA ribosyltransferase-isomerase (Thermotoga petrophila (strain ATCC BAA-488 / DSM 13995 / JCM 10881 / RKU-1)).